Consider the following 386-residue polypeptide: PqqA peptide cyclase (386 aa).

Residues 9–228 (SKPPLWLLAE…RQYIDQHHLK (220 aa)) enclose the Radical SAM core domain. [4Fe-4S] cluster contacts are provided by cysteine 23, cysteine 27, and cysteine 30.

It belongs to the radical SAM superfamily. PqqE family. Interacts with PqqD. The interaction is necessary for activity of PqqE. It depends on [4Fe-4S] cluster as a cofactor.

It catalyses the reaction [PQQ precursor protein] + S-adenosyl-L-methionine = E-Y cross-linked-[PQQ precursor protein] + 5'-deoxyadenosine + L-methionine + H(+). It functions in the pathway cofactor biosynthesis; pyrroloquinoline quinone biosynthesis. Its function is as follows. Catalyzes the cross-linking of a glutamate residue and a tyrosine residue in the PqqA protein as part of the biosynthesis of pyrroloquinoline quinone (PQQ). This is PqqA peptide cyclase from Acinetobacter baylyi (strain ATCC 33305 / BD413 / ADP1).